We begin with the raw amino-acid sequence, 253 residues long: N-acetylglucosaminyl-phosphatidylinositol de-N-acetylase (253 aa).

A helical membrane pass occupies residues 3 to 23; that stretch reads VAAPLLCLAAAVLVWGVLWVW. The Cytoplasmic segment spans residues 24–253; the sequence is GSWERMTRPE…YMRINSLNFL (230 aa).

This sequence belongs to the PIGL family.

It localises to the endoplasmic reticulum membrane. It carries out the reaction a 6-(N-acetyl-alpha-D-glucosaminyl)-1-(1,2-diacyl-sn-glycero-3-phospho)-1D-myo-inositol + H2O = a 6-(alpha-D-glucosaminyl)-1-(1,2-diacyl-sn-glycero-3-phospho)-1D-myo-inositol + acetate. It participates in glycolipid biosynthesis; glycosylphosphatidylinositol-anchor biosynthesis. Catalyzes the second step of glycosylphosphatidylinositol (GPI) biosynthesis, which is the de-N-acetylation of N-acetylglucosaminyl-phosphatidylinositol. This is N-acetylglucosaminyl-phosphatidylinositol de-N-acetylase (PIGL) from Bos taurus (Bovine).